Reading from the N-terminus, the 408-residue chain is Methyltransferase/ribosomally synthesized type I borosin cyclic peptide precursor sveMA (408 aa).

A methyltransferase domain region spans residues 1–250 (MASSTHPKRG…TSSTFYIPPR (250 aa)). Active-site residues include R73, Y77, and Y99. Residues Y99, H101, I104, A131, Q173, G211, S242, and T244 each contribute to the S-adenosyl-L-methionine site. The segment at 251–375 (DSEAIDYDMV…GSVYKVMSAT (125 aa)) is clasp domain. The segment at 371–385 (VMSATQADIELGKEP) is precursor leader. The residue at position 401 (V401) is an N-methylvaline. Residue I402 is modified to N-methylisoleucine. An N-methylvaline modification is found at V406.

In the N-terminal section; belongs to the precorrin methyltransferase family. As to quaternary structure, homodimer. In terms of processing, sveMA automethylates at Val-401, Ile-402 and Val-406 before being processed by a prolyloligopeptidase which likely forms a peptidyl ester upon removal of the follower propeptide, which then undergoes macrocyclization with the N-terminus of the modified core peptide. Peptide backbone alpha-N-methylations change the physicochemical properties of amide bonds to provide structural constraints and other favorable characteristics including biological membrane permeability to peptides.

It functions in the pathway secondary metabolite biosynthesis. Fusion protein of the methyltransferase sveM and a type I borosin core peptide; part of the gene cluster that mediates the biosynthesis of a type I borosin, a highly methylated cyclic peptide with potent biological activities. Type I borosins derive from the C-terminus of the fusion protein, and it is the same protein that methylates its own C-terminus using S-adenosyl methionine (SAM). The C-terminus is subsequently cleaved off and macrocyclized by a prolyloligopeptidase to give the final product. This chain is Methyltransferase/ribosomally synthesized type I borosin cyclic peptide precursor sveMA, found in Serendipita vermifera subsp. bescii (Mycorrhizal fungus).